A 113-amino-acid chain; its full sequence is Nitrogenase-stabilizing/protective protein NifW (113 aa).

This sequence belongs to the NifW family. As to quaternary structure, homotrimer; associates with NifD.

May protect the nitrogenase Fe-Mo protein from oxidative damage. This is Nitrogenase-stabilizing/protective protein NifW from Dechloromonas aromatica (strain RCB).